Reading from the N-terminus, the 155-residue chain is Small ribosomal subunit protein uS7 (155 aa).

Belongs to the universal ribosomal protein uS7 family. In terms of assembly, part of the 30S ribosomal subunit. Contacts proteins S9 and S11.

Its function is as follows. One of the primary rRNA binding proteins, it binds directly to 16S rRNA where it nucleates assembly of the head domain of the 30S subunit. Is located at the subunit interface close to the decoding center, probably blocks exit of the E-site tRNA. This Thermotoga petrophila (strain ATCC BAA-488 / DSM 13995 / JCM 10881 / RKU-1) protein is Small ribosomal subunit protein uS7.